Reading from the N-terminus, the 79-residue chain is Translational regulator CsrA (79 aa).

This sequence belongs to the CsrA/RsmA family. In terms of assembly, homodimer; the beta-strands of each monomer intercalate to form a hydrophobic core, while the alpha-helices form wings that extend away from the core.

It localises to the cytoplasm. Functionally, a translational regulator that binds mRNA to regulate translation initiation and/or mRNA stability. Usually binds in the 5'-UTR at or near the Shine-Dalgarno sequence preventing ribosome-binding, thus repressing translation. Its main target seems to be the major flagellin gene, while its function is anatagonized by FliW. This chain is Translational regulator CsrA, found in Geobacter sulfurreducens (strain ATCC 51573 / DSM 12127 / PCA).